Here is a 331-residue protein sequence, read N- to C-terminus: Ribonuclease Z (331 aa).

Zn(2+)-binding residues include His-56, His-58, Asp-60, His-61, His-162, Asp-235, and His-297. Residue Asp-60 is the Proton acceptor of the active site.

Belongs to the RNase Z family. Homodimer. It depends on Zn(2+) as a cofactor.

It catalyses the reaction Endonucleolytic cleavage of RNA, removing extra 3' nucleotides from tRNA precursor, generating 3' termini of tRNAs. A 3'-hydroxy group is left at the tRNA terminus and a 5'-phosphoryl group is left at the trailer molecule.. Its function is as follows. Zinc phosphodiesterase, which displays some tRNA 3'-processing endonuclease activity. Probably involved in tRNA maturation, by removing a 3'-trailer from precursor tRNA. This is Ribonuclease Z (rnz) from Deinococcus radiodurans (strain ATCC 13939 / DSM 20539 / JCM 16871 / CCUG 27074 / LMG 4051 / NBRC 15346 / NCIMB 9279 / VKM B-1422 / R1).